The chain runs to 276 residues: Transport and Golgi organization 2 homolog (276 aa).

The protein belongs to the Tango2 family. Expressed in fetal liver, lung, heart and kidney. In brain, detected in the olfactory bulb, neocortex and cerebellum. Elevated in mitral cells and minimally expressed in bulb interneurons. In the cortex, restricted to the upper portion of layer 5. In the cerebellum, excluded from Purkinje cells but expressed in granule cells.

The protein localises to the cytoplasm. Its subcellular location is the mitochondrion. It localises to the golgi apparatus. May be involved in lipid homeostasis. The protein is Transport and Golgi organization 2 homolog (Tango2) of Mus musculus (Mouse).